We begin with the raw amino-acid sequence, 104 residues long: Complex III assembly factor LYRM7 (104 aa).

A Phosphoserine modification is found at Ser60.

This sequence belongs to the complex I LYR family. In terms of assembly, interacts with UQCRFS1.

The protein resides in the mitochondrion matrix. In terms of biological role, assembly factor required for Rieske Fe-S protein UQCRFS1 incorporation into the cytochrome b-c1 (CIII) complex. Functions as a chaperone, binding to this subunit within the mitochondrial matrix and stabilizing it prior to its translocation and insertion into the late CIII dimeric intermediate within the mitochondrial inner membrane. This is Complex III assembly factor LYRM7 (Lyrm7) from Rattus norvegicus (Rat).